A 507-amino-acid chain; its full sequence is ATP synthase subunit alpha, chloroplastic (507 aa).

Glycine 170 to threonine 177 contacts ATP. Serine 383 is subject to Phosphoserine.

The protein belongs to the ATPase alpha/beta chains family. In terms of assembly, F-type ATPases have 2 components, CF(1) - the catalytic core - and CF(0) - the membrane proton channel. CF(1) has five subunits: alpha(3), beta(3), gamma(1), delta(1), epsilon(1). CF(0) has four main subunits: a, b, b' and c. Only phosphorylated in mesophyll cells, and only when cells are grown under high rather than low light regimes (70 vs 900 umol photons/m-2/s).

The protein localises to the plastid. It localises to the chloroplast thylakoid membrane. The enzyme catalyses ATP + H2O + 4 H(+)(in) = ADP + phosphate + 5 H(+)(out). Its function is as follows. Produces ATP from ADP in the presence of a proton gradient across the membrane. The alpha chain is a regulatory subunit. In Zea mays (Maize), this protein is ATP synthase subunit alpha, chloroplastic.